We begin with the raw amino-acid sequence, 147 residues long: Phospholipase A2 inhibitor subunit A (147 aa).

The region spanning 62–143 is the C-type lectin domain; that stretch reads EICEEAGGHI…DENLLVVCEF (82 aa). Disulfide bonds link C64–C141 and C119–C133. The N-linked (GlcNAc...) asparagine glycan is linked to N103.

Belongs to the alpha-type phospholipase A2 inhibitor family. Homo- or heterotrimer; homotrimer of PLI-A chains, two PLI-A and one PLI-B chains, one PLI-A and two PLI-B chains, and homotrimer of PLI-B chains (with a ratio of 1:3:3:1). As to expression, expressed by the liver.

It localises to the secreted. In terms of biological role, PLI binds directly phospholipase A2 in the presence or absence of calcium. Inhibitory activity of the PLI-A homotrimer is more specific than that of the PLI-B homotrimer. In Protobothrops flavoviridis (Habu), this protein is Phospholipase A2 inhibitor subunit A.